Here is a 206-residue protein sequence, read N- to C-terminus: GTP-binding protein YPT1 (206 aa).

Met1 is subject to N-acetylmethionine. GTP is bound by residues 17–23 (SGVGKSC), 33–40 (YTNDYIST), Gly66, and 121–124 (NKCD). Cys23 carries S-palmitoyl cysteine lipidation. Positions 37-45 (YISTIGVDF) match the Effector region motif. The interval 63-80 (DTAGQERFRTITSSYYRG) is interaction with GDI1. Cys123 carries the S-palmitoyl cysteine lipid modification. A Glycyl lysine isopeptide (Lys-Gly) (interchain with G-Cter in ubiquitin) cross-link involves residue Lys144. A GTP-binding site is contributed by 152–153 (AL). Ser172 and Ser174 each carry phosphoserine. The segment at 173–206 (MSQQNLNETTQKKEDKGNVNLKGQSLTNTGGGCC) is disordered. The segment at 189-195 (GNVNLKG) is interaction with GDI1. S-geranylgeranyl cysteine attachment occurs at residues Cys205 and Cys206.

The protein belongs to the small GTPase superfamily. Rab family. As to quaternary structure, forms a complex with the Rab escort protein (REP) MRS6, which is recognized by Rab geranylgeranyltransferase BET2-BET4. Interacts with the Rab GDP dissociation inhibitor GDI1, which can retrieve from and deliver to membranes the GDP-bound and prenylated form of YPT1. Interacts with YIP1, which is required for proper membrane targeting of prenylated YPT1. Interacts with YIF1, YIP3, YIP4 and YIP5. In terms of processing, prenylation is required for interaction with GDI1 and YIP1.

The protein localises to the endoplasmic reticulum membrane. Its subcellular location is the golgi apparatus membrane. The protein resides in the cytoplasm. It is found in the preautophagosomal structure membrane. Its activity is regulated as follows. Rab activation is generally mediated by a guanine exchange factor (GEF), while inactivation through hydrolysis of bound GTP is catalyzed by a GTPase activating protein (GAP). YPT1 is activated by the GEFs DSS4 and TRAPP complex, and inactivated by GAPs GYP1, GYP5 and GYP8. Its function is as follows. The small GTPases Rab are key regulators of intracellular membrane trafficking, from the formation of transport vesicles to their fusion with membranes. Rabs cycle between an inactive GDP-bound form and an active GTP-bound form that is able to recruit to membranes different set of downstream effectors directly responsible for vesicle formation, movement, tethering and fusion. YPT1 regulates the trafficking of secretory vesicles from the endoplasmic reticulum (ER) to the Golgi. Vesicular transport depends on shuttling of YPT1 between membrane and cytosol by GDI1, probably by recycling it to its membrane of origin after a vesicle fusion event. Plays a role in the initial events of the autophagic vacuole development which take place at specialized regions of the endoplasmic reticulum. Also involved in the recycling of membrane proteins. This is GTP-binding protein YPT1 (YPT1) from Saccharomyces cerevisiae (strain ATCC 204508 / S288c) (Baker's yeast).